Consider the following 273-residue polypeptide: Large ribosomal subunit protein uL2cz/uL2cy (273 aa).

Disordered regions lie at residues 1–22 (MAIH…DSQV) and 223–254 (MNPV…PALG).

The protein belongs to the universal ribosomal protein uL2 family. In terms of assembly, part of the 50S ribosomal subunit.

The protein localises to the plastid. It localises to the chloroplast. The chain is Large ribosomal subunit protein uL2cz/uL2cy (rpl2-A) from Drimys granadensis.